A 122-amino-acid chain; its full sequence is Large ribosomal subunit protein uL18 (122 aa).

This sequence belongs to the universal ribosomal protein uL18 family. As to quaternary structure, part of the 50S ribosomal subunit; part of the 5S rRNA/L5/L18/L25 subcomplex. Contacts the 5S and 23S rRNAs.

In terms of biological role, this is one of the proteins that bind and probably mediate the attachment of the 5S RNA into the large ribosomal subunit, where it forms part of the central protuberance. The chain is Large ribosomal subunit protein uL18 from Syntrophotalea carbinolica (strain DSM 2380 / NBRC 103641 / GraBd1) (Pelobacter carbinolicus).